The chain runs to 298 residues: Distal tail protein (298 aa).

Belongs to the skunalikevirus distal tail protein family. In terms of assembly, homohexamer. Interacts with the receptor binding protein.

Its subcellular location is the virion. Its function is as follows. Forms the distal part of the tail. Self-associates as two rings organized back to back, with a central channel allowing DNA ejection. The protein is Distal tail protein of Lactococcus phage SK1 (Lactococcus lactis bacteriophage SK1).